Reading from the N-terminus, the 218-residue chain is Probable transaldolase (218 aa).

Lys87 (schiff-base intermediate with substrate) is an active-site residue.

The protein belongs to the transaldolase family. Type 3B subfamily.

Its subcellular location is the cytoplasm. The enzyme catalyses D-sedoheptulose 7-phosphate + D-glyceraldehyde 3-phosphate = D-erythrose 4-phosphate + beta-D-fructose 6-phosphate. It participates in carbohydrate degradation; pentose phosphate pathway; D-glyceraldehyde 3-phosphate and beta-D-fructose 6-phosphate from D-ribose 5-phosphate and D-xylulose 5-phosphate (non-oxidative stage): step 2/3. Functionally, transaldolase is important for the balance of metabolites in the pentose-phosphate pathway. The polypeptide is Probable transaldolase (Bacteroides fragilis (strain ATCC 25285 / DSM 2151 / CCUG 4856 / JCM 11019 / LMG 10263 / NCTC 9343 / Onslow / VPI 2553 / EN-2)).